We begin with the raw amino-acid sequence, 357 residues long: Alanine racemase, catabolic (357 aa).

Lys-33 acts as the Proton acceptor; specific for D-alanine in catalysis. An N6-(pyridoxal phosphate)lysine modification is found at Lys-33. Arg-129 contacts substrate. The active-site Proton acceptor; specific for L-alanine is Tyr-253. Met-301 contributes to the substrate binding site.

This sequence belongs to the alanine racemase family. Pyridoxal 5'-phosphate serves as cofactor.

It catalyses the reaction L-alanine = D-alanine. The protein operates within amino-acid biosynthesis; D-alanine biosynthesis; D-alanine from L-alanine: step 1/1. Isomerizes L-alanine to D-alanine which is then likely oxidized to pyruvate by DadA. Shows racemase activity with both alanine stereoisomers, negligible activity with D-cysteine and L-serine, and exhibits no activity with the remaining natural chiral amino acids. The chain is Alanine racemase, catabolic from Pseudomonas putida (strain ATCC 47054 / DSM 6125 / CFBP 8728 / NCIMB 11950 / KT2440).